Consider the following 72-residue polypeptide: uncharacterized protein (72 aa).

Transmembrane regions (helical) follow at residues 15–35 (WEIL…IGSI) and 50–70 (ILIY…MYFI).

It is found in the host membrane. This is an uncharacterized protein from Spiroplasma melliferum (SpV1).